Consider the following 1059-residue polypeptide: Pleckstrin homology domain-containing family M member 1 (1059 aa).

An RUN domain is found at 40–182; sequence TSEDGDANTM…LSFELSYKSA (143 aa). Ser218 is subject to Phosphoserine. 3 disordered regions span residues 218 to 244, 272 to 334, and 354 to 411; these read SLDSISHSSGSEDIEVQHSGHKIRRDR, LQEN…TPMF, and SEEP…DQGS. 2 stretches are compositionally biased toward polar residues: residues 313–334 and 392–401; these read SKAQVNSAPSSGPSQESDTPMF and GSTSDQQPSS. A phosphoserine mark is found at Ser430, Ser433, and Ser488. Residues 536 to 627 form the PH 1 domain; it reads GLMKLGTVAR…WLDRVREALQ (92 aa). Positions 634–640 match the LIR motif; it reads EEEWVNI. The interaction with RAB7A stretch occupies residues 657 to 1059; the sequence is LPPYSALLPE…RKYQEQNTVS (403 aa). Residues 686-780 form the PH 2 domain; that stretch reads DAIKESLLYL…WRDLVRKVLA (95 aa). Residues 989-1043 form a Phorbol-ester/DAG-type zinc finger; sequence QHVYHCDLCTQRGFICQICHHQDIIFPFEFDTTVRCAECRTVFHQSCQAVVRKGC.

As to quaternary structure, interacts (via N- and C-terminus) with RAB7A (GTP-bound form). Simultaneously interacts with RAB7A and ARL8B; bringing about clustering and fusion of late endosomes and lysosomes. Interacts (via RUN domain) with ARL8B (GTP-bound form); the interaction is required for PLEKHM1 localization to lysosomes and for ARL8B function in delivery and degradation of endocytic and autophagic cargo in lysosomes. PLEKHM1 and PLEKHM2 compete for interaction with ARL8B. Interacts with ARL8A; the interaction is weaker than with ARL8B. Interacts with VPS41, VPS11, VPS18, VPS33A and VPS39; indicative for an association with the HOPS complex; the interactions with, at least, VPS41, VPS11, VPS18 and VPS33A require ARL8B. Interacts with GABARAP, GABARAPL, GABARAPL2, MAP1LC3A, MAP1LC3B and MAP1LC3C. Interacts with PAFAH1B. Interacts (via N- and C-terminus) with NDEL1. Interacts (via C-terminus) with MAP3K7. Interacts (via N- and C-terminus) with FAM98A. Interacts (via C-terminus) with DEF8; this interaction is weak but increased in a RAB7A-dependent manner. May interact with sialyl-lex-positive protein. As to expression, expressed in testis, skeletal muscle, lung, liver, spleen, brain, heart, kidney and bone. Weakly expressed in monocytes (at protein level).

Its subcellular location is the autolysosome membrane. The protein resides in the endosome membrane. It is found in the late endosome membrane. It localises to the lysosome membrane. In terms of biological role, acts as a multivalent adapter protein that regulates Rab7-dependent and HOPS complex-dependent fusion events in the endolysosomal system and couples autophagic and the endocytic trafficking pathways. Acts as a dual effector of RAB7A and ARL8B that simultaneously binds these GTPases, bringing about clustering and fusion of late endosomes and lysosomes. Required for late stages of endolysosomal maturation, facilitating both endocytosis-mediated degradation of growth factor receptors and autophagosome clearance. Interaction with Arl8b is a crucial factor in the terminal maturation of autophagosomes and to mediate autophagosome-lysosome fusion. Positively regulates lysosome peripheral distribution and ruffled border formation in osteoclasts. May be involved in negative regulation of endocytic transport from early endosome to late endosome/lysosome implicating its association with Rab7. May have a role in sialyl-lex-mediated transduction of apoptotic signals. Involved in bone resorption. This Rattus norvegicus (Rat) protein is Pleckstrin homology domain-containing family M member 1.